An 84-amino-acid chain; its full sequence is Small ribosomal subunit protein uS17 (84 aa).

Belongs to the universal ribosomal protein uS17 family. As to quaternary structure, part of the 30S ribosomal subunit.

Functionally, one of the primary rRNA binding proteins, it binds specifically to the 5'-end of 16S ribosomal RNA. The protein is Small ribosomal subunit protein uS17 of Shigella boydii serotype 18 (strain CDC 3083-94 / BS512).